Here is a 403-residue protein sequence, read N- to C-terminus: F-box protein At2g40925 (403 aa).

Positions 21–71 constitute an F-box domain; the sequence is NRHDCEIPPDLMIEILIRLPTKSFMRFKCVSKQWSPLISGRYFCNRLFTCV.

In Arabidopsis thaliana (Mouse-ear cress), this protein is F-box protein At2g40925.